Here is a 239-residue protein sequence, read N- to C-terminus: 2,3,4,5-tetrahydropyridine-2,6-dicarboxylate N-acetyltransferase (239 aa).

The protein belongs to the transferase hexapeptide repeat family. DapH subfamily.

The catalysed reaction is (S)-2,3,4,5-tetrahydrodipicolinate + acetyl-CoA + H2O = L-2-acetamido-6-oxoheptanedioate + CoA. It functions in the pathway amino-acid biosynthesis; L-lysine biosynthesis via DAP pathway; LL-2,6-diaminopimelate from (S)-tetrahydrodipicolinate (acetylase route): step 1/3. Its function is as follows. Catalyzes the transfer of an acetyl group from acetyl-CoA to tetrahydrodipicolinate. The protein is 2,3,4,5-tetrahydropyridine-2,6-dicarboxylate N-acetyltransferase of Staphylococcus carnosus (strain TM300).